We begin with the raw amino-acid sequence, 335 residues long: Nucleoid-associated protein YejK (335 aa).

This sequence belongs to the YejK family.

The protein resides in the cytoplasm. It localises to the nucleoid. The protein is Nucleoid-associated protein YejK of Salmonella enteritidis PT4 (strain P125109).